Consider the following 164-residue polypeptide: 3-hydroxyacyl-[acyl-carrier-protein] dehydratase FabZ (164 aa).

Residue His-70 is part of the active site.

This sequence belongs to the thioester dehydratase family. FabZ subfamily.

It localises to the cytoplasm. The catalysed reaction is a (3R)-hydroxyacyl-[ACP] = a (2E)-enoyl-[ACP] + H2O. Involved in unsaturated fatty acids biosynthesis. Catalyzes the dehydration of short chain beta-hydroxyacyl-ACPs and long chain saturated and unsaturated beta-hydroxyacyl-ACPs. This is 3-hydroxyacyl-[acyl-carrier-protein] dehydratase FabZ from Synechocystis sp. (strain ATCC 27184 / PCC 6803 / Kazusa).